The chain runs to 474 residues: Eukaryotic translation initiation factor 3 subunit L (474 aa).

A PCI domain is found at 255 to 449 (DAIRMFSHIL…DLDYALQGDL (195 aa)).

This sequence belongs to the eIF-3 subunit L family. In terms of assembly, component of the eukaryotic translation initiation factor 3 (eIF-3) complex.

It is found in the cytoplasm. Its function is as follows. Component of the eukaryotic translation initiation factor 3 (eIF-3) complex, which is involved in protein synthesis of a specialized repertoire of mRNAs and, together with other initiation factors, stimulates binding of mRNA and methionyl-tRNAi to the 40S ribosome. The eIF-3 complex specifically targets and initiates translation of a subset of mRNAs involved in cell proliferation. The chain is Eukaryotic translation initiation factor 3 subunit L from Chaetomium globosum (strain ATCC 6205 / CBS 148.51 / DSM 1962 / NBRC 6347 / NRRL 1970) (Soil fungus).